Consider the following 123-residue polypeptide: Maintenance of telomere capping protein 3, mitochondrial (123 aa).

A mitochondrion-targeting transit peptide spans 1–37 (MMGRNGIRLALKRSFSTYQPPVVEITNITKLWPTLRP).

It is found in the mitochondrion. Its function is as follows. May be involved in telomere capping. The polypeptide is Maintenance of telomere capping protein 3, mitochondrial (MTC3) (Saccharomyces cerevisiae (strain ATCC 204508 / S288c) (Baker's yeast)).